The chain runs to 294 residues: Cytidine deaminase (294 aa).

CMP/dCMP-type deaminase domains lie at 48-168 and 187-294; these read DDDA…FGPT and AETD…RVTF. Substrate is bound at residue 89–91; it reads NME. His102 contributes to the Zn(2+) binding site. The active-site Proton donor is Glu104. Zn(2+)-binding residues include Cys129 and Cys132.

The protein belongs to the cytidine and deoxycytidylate deaminase family. Homodimer. Zn(2+) serves as cofactor.

The catalysed reaction is cytidine + H2O + H(+) = uridine + NH4(+). The enzyme catalyses 2'-deoxycytidine + H2O + H(+) = 2'-deoxyuridine + NH4(+). This enzyme scavenges exogenous and endogenous cytidine and 2'-deoxycytidine for UMP synthesis. This Yersinia pseudotuberculosis serotype IB (strain PB1/+) protein is Cytidine deaminase.